Reading from the N-terminus, the 119-residue chain is MSEEKDTPLEAFASLKHSGVTPQKVRRIVDLIRGRSVDEALAILRFSPHSASGILYKLIVSAQANYANLLGRDDDLFVSSVYVDEGKTYKRGRPRARGSSSRILKRGSHVTVTLSKEVR.

This sequence belongs to the universal ribosomal protein uL22 family. In terms of assembly, part of the 50S ribosomal subunit.

This protein binds specifically to 23S rRNA; its binding is stimulated by other ribosomal proteins, e.g. L4, L17, and L20. It is important during the early stages of 50S assembly. It makes multiple contacts with different domains of the 23S rRNA in the assembled 50S subunit and ribosome. Functionally, the globular domain of the protein is located near the polypeptide exit tunnel on the outside of the subunit, while an extended beta-hairpin is found that lines the wall of the exit tunnel in the center of the 70S ribosome. The polypeptide is Large ribosomal subunit protein uL22 (Tropheryma whipplei (strain TW08/27) (Whipple's bacillus)).